The sequence spans 716 residues: Probable glutamate--tRNA ligase, cytoplasmic (716 aa).

S190 is subject to Phosphoserine. 210 to 212 (RFP) lines the L-glutamate pocket. The 'HIGH' region motif lies at 215-224 (PSGYLHIGHA). H220 provides a ligand contact to ATP. Residues D246, 386–390 (YDFAC), and R404 contribute to the L-glutamate site. ATP-binding positions include E407 and 441-445 (LLSKR). The 'KMSKS' region motif lies at 441–445 (LLSKR).

It belongs to the class-I aminoacyl-tRNA synthetase family. Glutamate--tRNA ligase type 2 subfamily. In terms of assembly, component of a yeast aminoacyl-tRNA synthase (aaRS) complex formed by methionyl-tRNA synthase, glutamyl-tRNA synthase and the tRNA aminoacylation cofactor arc1 in a stoichiometric complex. Interacts with arc1/SPAC30C2.04.

The protein localises to the cytoplasm. It is found in the nucleus. The catalysed reaction is tRNA(Glu) + L-glutamate + ATP = L-glutamyl-tRNA(Glu) + AMP + diphosphate. In terms of biological role, catalyzes the attachment of glutamate to tRNA(Glu) in a two-step reaction: glutamate is first activated by ATP to form Glu-AMP and then transferred to the acceptor end of tRNA(Glu). This Schizosaccharomyces pombe (strain 972 / ATCC 24843) (Fission yeast) protein is Probable glutamate--tRNA ligase, cytoplasmic (gus1).